Reading from the N-terminus, the 2731-residue chain is Teneurin-m (2731 aa).

Disordered stretches follow at residues 1–60 and 103–136; these read MNPY…QNQQ and LLEG…NNPN. The Cytoplasmic segment spans residues 1–229; that stretch reads MNPYEYESTL…RKDLVARCSS (229 aa). The span at 110 to 119 shows a compositional bias: pro residues; sequence TAPPDVPPRN. Residues 120–136 are compositionally biased toward polar residues; that stretch reads PTMSRMQNGRLTVNNPN. A helical membrane pass occupies residues 230–250; that stretch reads PWFGIGSISVLFAFVVMLILL. At 251–2731 the chain is on the extracellular side; sequence TTTGVIKWNQ…RQLKFGELSA (2481 aa). The disordered stretch occupies residues 321-387; it reads SSAATVTTAT…RTFPARSFPP (67 aa). A compositionally biased stretch (low complexity) spans 322 to 370; it reads SAATVTTATSNSGTAQGLQSTSASAEATSSAATSSSQSSLTPSLSSSLA. EGF-like domains are found at residues 536–572, 574–606, 643–676, and 738–774; these read GGDD…KECS, RHDE…KFCE, DALQ…DDCS, and TIEG…PDCG. Intrachain disulfides connect Cys-540–Cys-549, Cys-545–Cys-560, Cys-562–Cys-571, Cys-578–Cys-589, Cys-583–Cys-594, Cys-596–Cys-605, Cys-651–Cys-664, Cys-666–Cys-675, Cys-742–Cys-752, Cys-746–Cys-762, and Cys-764–Cys-773. Asn-857 carries an N-linked (GlcNAc...) asparagine glycan. 4 NHL repeats span residues 1160–1201, 1202–1246, 1391–1434, and 1459–1502; these read ECPD…IMTD, GSIR…VRDT, STAY…VRVI, and CFEA…VMSS. One copy of the YD repeat lies at 1618-1652; sequence TGLLRTKLDSTGRSYVYNYDEFGRLTSAVTPTGRV. Residues 2691–2731 are disordered; it reads LADDPGNVAFQRDAKRKRRKTGSSHRSASNRRQLKFGELSA. The span at 2704-2724 shows a compositional bias: basic residues; the sequence is AKRKRRKTGSSHRSASNRRQL.

Belongs to the tenascin family. Teneurin subfamily. As to quaternary structure, homodimer. Heterodimer with Ten-a. Interacts with Ten-a; the interaction occurs at the neuromuscular junction. Interacts with alpha-Spec and cher. Post-translationally, phosphorylated. Phosphorylation occurs at tyrosine residues. Proteolytically cleaved. As to expression, expressed in muscles and motor neurons (at protein level).

It is found in the cytoplasm. Its subcellular location is the postsynaptic cell membrane. It localises to the synapse. The protein localises to the synaptosome. The protein resides in the membrane. Functionally, involved in neural development, regulating the establishment of proper connectivity within the nervous system. Acts as a homophilic and heterophilic synaptic cell adhesion molecule that drives synapse assembly. Promotes bi-directional trans-synaptic signaling with Ten-a to organize neuromuscular synapses. Functions in olfactory synaptic partner matching by promoting homophilic cell adhesion between pre-synaptic olfactory receptor neurons (ORN) axons and post-synaptic projection neurons (PN) dendrites partner in the developing antennal lobe to form stable connections. Also required for peripheral axon growth cone guidance and target recognition of motor neurons. This is Teneurin-m (Ten-m) from Drosophila melanogaster (Fruit fly).